A 334-amino-acid polypeptide reads, in one-letter code: Beta-hexosaminidase (334 aa).

Residues aspartate 60, arginine 68, arginine 133, and 163 to 164 contribute to the substrate site; that span reads KH. Histidine 176 functions as the Proton donor/acceptor in the catalytic mechanism. Catalysis depends on aspartate 247, which acts as the Nucleophile.

Belongs to the glycosyl hydrolase 3 family. NagZ subfamily.

Its subcellular location is the cytoplasm. The enzyme catalyses Hydrolysis of terminal non-reducing N-acetyl-D-hexosamine residues in N-acetyl-beta-D-hexosaminides.. Its pathway is cell wall biogenesis; peptidoglycan recycling. In terms of biological role, plays a role in peptidoglycan recycling by cleaving the terminal beta-1,4-linked N-acetylglucosamine (GlcNAc) from peptide-linked peptidoglycan fragments, giving rise to free GlcNAc, anhydro-N-acetylmuramic acid and anhydro-N-acetylmuramic acid-linked peptides. This Xanthomonas oryzae pv. oryzae (strain KACC10331 / KXO85) protein is Beta-hexosaminidase.